The sequence spans 414 residues: WW domain-containing oxidoreductase (414 aa).

The tract at residues 1 to 23 (MAALRYAGLDDTDSEDELPPGWE) is disordered. Position 12 is a phosphothreonine (Thr-12). Ser-14 carries the phosphoserine modification. In terms of domain architecture, WW 1 spans 16 to 49 (DELPPGWEERTTKDGWVYYANHTEEKTQWEHPKT). Tyr-33 is subject to Phosphotyrosine. Positions 50–55 (GKRKRV) match the Nuclear localization signal motif. The WW 2 domain occupies 57–90 (GDLPYGWEQETDENGQVFFVDHINKRTTYLDPRL). Positions 125 to 414 (KVVVVTGANS…IQERLGSQSG (290 aa)) are interaction with MAPT. 131–137 (GANSGIG) is a binding site for NADP(+). The mediates targeting to the mitochondria stretch occupies residues 209–273 (CNAATFALPW…RFTDINDSLG (65 aa)). Substrate is bound at residue Ser-260. Tyr-287 is subject to Phosphotyrosine; by TNK2. The active-site Proton acceptor is the Tyr-293.

Belongs to the short-chain dehydrogenases/reductases (SDR) family. As to quaternary structure, interacts with TP53, p73/TP73 and MAPK8. Interacts with MAPT/TAU, RUNX2 and HYAL2. Forms a ternary complex with TP53 and MDM2. Interacts with ERBB4, LITAF and WBP1. Interacts with DVL1, DVL2 and DVL3. May interact with FAM189B and SCOTIN. Interacts with TNK2. Interacts with TMEM207. Interacts (via WW domain) with VOPP1. Post-translationally, phosphorylated upon genotoxic stress. Phosphorylation of Tyr-33 regulates interaction with TP53, TP73 and MAPK8. May also regulate proapoptotic activity. Phosphorylation by TNK2 is associated with polyubiquitination and degradation. Ubiquitinated when phosphorylated by TNK2, leading to its degradation. As to expression, widely expressed. Strongly expressed in testis, prostate, and ovary. Overexpressed in cancer cell lines. Isoform 5 and isoform 6 may only be expressed in tumor cell lines.

It is found in the cytoplasm. Its subcellular location is the nucleus. The protein resides in the mitochondrion. The protein localises to the golgi apparatus. It localises to the lysosome. Its function is as follows. Putative oxidoreductase. Acts as a tumor suppressor and plays a role in apoptosis. Required for normal bone development. May function synergistically with p53/TP53 to control genotoxic stress-induced cell death. Plays a role in TGFB1 signaling and TGFB1-mediated cell death. May also play a role in tumor necrosis factor (TNF)-mediated cell death. Inhibits Wnt signaling, probably by sequestering DVL2 in the cytoplasm. The polypeptide is WW domain-containing oxidoreductase (WWOX) (Homo sapiens (Human)).